The following is a 421-amino-acid chain: Type II methyltransferase M.SfiI (421 aa).

The protein belongs to the N(4)/N(6)-methyltransferase family. N(4) subfamily.

It carries out the reaction a 2'-deoxycytidine in DNA + S-adenosyl-L-methionine = an N(4)-methyl-2'-deoxycytidine in DNA + S-adenosyl-L-homocysteine + H(+). A beta subtype methylase, recognizes the double-stranded sequence 5'-GGCCNNNNNGGCC-3', methylates C-? on both strands, and protects the DNA from cleavage by the SfiI endonuclease. In Streptomyces fimbriatus, this protein is Type II methyltransferase M.SfiI.